The chain runs to 132 residues: Interleukin-13 (132 aa).

A signal peptide spans 1–18; it reads MALLLTMVIALTCLGGFA. N-linked (GlcNAc...) asparagine glycosylation is found at Asn38, Asn49, Asn57, and Asn72. 2 disulfides stabilise this stretch: Cys48–Cys76 and Cys64–Cys90.

It belongs to the IL-4/IL-13 family. As to quaternary structure, interacts with IL13RA2.

Its subcellular location is the secreted. Cytokine that plays important roles in allergic inflammation and immune response to parasite infection. Synergizes with IL2 in regulating interferon-gamma synthesis. Stimulates B-cell proliferation, and activation of eosinophils, basophils, and mast cells. Plays an important role in controlling IL33 activity by modulating the production of transmembrane and soluble forms of interleukin-1 receptor-like 1/IL1RL1. Displays the capacity to antagonize Th1-driven proinflammatory immune response and downregulates synthesis of many proinflammatory cytokines including IL1, IL6, IL10, IL12 and TNF-alpha through a mechanism that partially involves suppression of NF-kappa-B. Also functions on nonhematopoietic cells, including endothelial cells where it induces vascular cell adhesion protein 1/VCAM1, which is important in the recruitment of eosinophils. Exerts its biological effects through its receptors which comprises the IL4R chain and the IL13RA1 chain, to activate JAK1 and TYK2, leading to the activation of STAT6. Aside from IL13RA1, another receptor IL13RA2 acts as a high affinity decoy for IL13 and mediates internalization and depletion of extracellular IL13. The chain is Interleukin-13 (IL13) from Macaca thibetana (Pere David's macaque).